The sequence spans 261 residues: Indole-3-glycerol phosphate synthase (261 aa).

Belongs to the TrpC family.

The catalysed reaction is 1-(2-carboxyphenylamino)-1-deoxy-D-ribulose 5-phosphate + H(+) = (1S,2R)-1-C-(indol-3-yl)glycerol 3-phosphate + CO2 + H2O. The protein operates within amino-acid biosynthesis; L-tryptophan biosynthesis; L-tryptophan from chorismate: step 4/5. The polypeptide is Indole-3-glycerol phosphate synthase (Burkholderia pseudomallei (strain 668)).